A 355-amino-acid chain; its full sequence is Methyltransferase FUS9 (355 aa).

Residues Y18, N63, D86, S123, and F124 each coordinate S-adenosyl-L-homocysteine. F231 is a Mg(2+) binding site.

It belongs to the methyltransferase superfamily. Type-7 methyltransferase family. Mg(2+) is required as a cofactor.

Its pathway is mycotoxin biosynthesis. Methyltransferase; part of the gene cluster that mediates the biosynthesis of the mycotoxin fusarin C. Within the cluster, FUS1, FUS2, FUS8 and FUS9 are sufficient for fusarin production. The roles of the other FUS members are yet undetermined. The fusarin C synthetase FUS1 is responsible for the condensation of one acetyl-coenzyme A (CoA) unit with six malonyl-CoA units and the amide linkage of the arising heptaketide and homoserine, subsequently releasing the first intermediate, prefusarin, as an alcohol with an open ring structure. The cytochrome P450 monooxygenase FUS8 participates in multiple oxidation processes at carbon C-20 and is able to use the FUS1 product as substrate, resulting in formation of 20-hydroxy-prefusarin. This reaction seems to be essential before the 2-pyrrolidone ring closure can be catalyzed by FUS2, generating 20-hydroxy-fusarin. FUS8 is able to further oxidizes carbon C-20 after ring closure, resulting in the formation of carboxy-fusarin C. As the last step, FUS9 methylates the hydroxyl group at C-21 to generate fusarin C. Fusarin C can then rearrange to epi-fusarin C, the (z)-isomers, and fusarin A and fusarin D. The chain is Methyltransferase FUS9 from Gibberella fujikuroi (strain CBS 195.34 / IMI 58289 / NRRL A-6831) (Bakanae and foot rot disease fungus).